Here is a 630-residue protein sequence, read N- to C-terminus: Succinate dehydrogenase [ubiquinone] flavoprotein subunit, mitochondrial (630 aa).

Residues 1–31 constitute a mitochondrion transit peptide; it reads MWRGCVSRGLRSLSKGKGSSSSAPVSAAARL. Residues 52 to 57, 75 to 90, and Asp-260 each bind FAD; these read GAGGAG and TKLF…AQGG. At His-83 the chain carries Tele-8alpha-FAD histidine. His-281 and Thr-293 together coordinate substrate. Arg-325 serves as the catalytic Proton acceptor. His-392 contributes to the substrate binding site. Residue Glu-426 participates in FAD binding. Substrate is bound at residue Arg-437. Position 442–443 (442–443) interacts with FAD; it reads SL.

Belongs to the FAD-dependent oxidoreductase 2 family. FRD/SDH subfamily. In terms of assembly, component of complex II composed of eight subunits in plants: four classical SDH subunits SDH1, SDH2, SDH3 and SDH4 (a flavoprotein (FP), an iron-sulfur protein (IP), and a cytochrome b composed of a large and a small subunit.), as well as four subunits unknown in mitochondria from bacteria and heterotrophic eukaryotes. FAD serves as cofactor.

The protein localises to the mitochondrion inner membrane. The enzyme catalyses a quinone + succinate = fumarate + a quinol. It functions in the pathway carbohydrate metabolism; tricarboxylic acid cycle; fumarate from succinate (eukaryal route): step 1/1. Flavoprotein (FP) subunit of succinate dehydrogenase (SDH) that is involved in complex II of the mitochondrial electron transport chain and is responsible for transferring electrons from succinate to ubiquinone (coenzyme Q). In Oryza sativa subsp. japonica (Rice), this protein is Succinate dehydrogenase [ubiquinone] flavoprotein subunit, mitochondrial (SDH1).